The chain runs to 291 residues: Protease HtpX homolog (291 aa).

2 helical membrane passes run 4–24 (VFLF…SARL) and 38–58 (MGML…ISLL). H144 serves as a coordination point for Zn(2+). The active site involves E145. H148 contacts Zn(2+). 2 consecutive transmembrane segments (helical) span residues 159 to 179 (LIQG…AYAL) and 199 to 219 (ISSI…VMYF). E224 contributes to the Zn(2+) binding site.

This sequence belongs to the peptidase M48B family. Zn(2+) is required as a cofactor.

The protein localises to the cell inner membrane. The protein is Protease HtpX homolog of Chlorobium phaeovibrioides (strain DSM 265 / 1930) (Prosthecochloris vibrioformis (strain DSM 265)).